The chain runs to 113 residues: Ribulose bisphosphate carboxylase small subunit (113 aa).

The protein belongs to the RuBisCO small chain family. In terms of assembly, heterohexadecamer of 8 large and 8 small subunits. Forms a CsoS2-CsoS1-RuBisCO complex.

The protein localises to the carboxysome. Functionally, ruBisCO catalyzes two reactions: the carboxylation of D-ribulose 1,5-bisphosphate, the primary event in carbon dioxide fixation, as well as the oxidative fragmentation of the pentose substrate in the photorespiration process. Both reactions occur simultaneously and in competition at the same active site. Although the small subunit is not catalytic it is essential for maximal activity. There are estimated to be 152 RuBisCO holoenzymes per carboxysome. This is Ribulose bisphosphate carboxylase small subunit from Prochlorococcus marinus subsp. pastoris (strain CCMP1986 / NIES-2087 / MED4).